Reading from the N-terminus, the 325-residue chain is Phospholipid phosphatase-related protein type 1 (325 aa).

The N-linked (GlcNAc...) asparagine glycan is linked to N5. The next 3 helical transmembrane spans lie at I13–Y33, F67–I87, and F127–V147. N163 carries an N-linked (GlcNAc...) asparagine glycan. 3 helical membrane passes run A201–T218, V230–V247, and V257–H277. S307 bears the Phosphoserine mark. Residue N316 is glycosylated (N-linked (GlcNAc...) asparagine).

It belongs to the PA-phosphatase related phosphoesterase family.

The protein resides in the cell membrane. It is found in the cell projection. Its subcellular location is the neuron projection. Functionally, may play a role in neurite outgrowth and neurogenesis. In Mus musculus (Mouse), this protein is Phospholipid phosphatase-related protein type 1.